The primary structure comprises 102 residues: Large ribosomal subunit protein bL21 (102 aa).

Belongs to the bacterial ribosomal protein bL21 family. In terms of assembly, part of the 50S ribosomal subunit. Contacts protein L20.

In terms of biological role, this protein binds to 23S rRNA in the presence of protein L20. This chain is Large ribosomal subunit protein bL21, found in Geobacter metallireducens (strain ATCC 53774 / DSM 7210 / GS-15).